Consider the following 651-residue polypeptide: Acetyl-coenzyme A synthetase (651 aa).

CoA is bound by residues 190-193 (RRGK) and Thr-311. Residues 387-389 (GEP), 411-416 (DTWWQT), Asp-508, and Arg-523 each bind ATP. Ser-531 contacts CoA. Arg-534 contributes to the ATP binding site. Mg(2+) contacts are provided by Val-545, His-547, and Val-550. Lys-617 carries the N6-acetyllysine modification.

Belongs to the ATP-dependent AMP-binding enzyme family. It depends on Mg(2+) as a cofactor. In terms of processing, acetylated. Deacetylation by the SIR2-homolog deacetylase activates the enzyme.

It catalyses the reaction acetate + ATP + CoA = acetyl-CoA + AMP + diphosphate. Catalyzes the conversion of acetate into acetyl-CoA (AcCoA), an essential intermediate at the junction of anabolic and catabolic pathways. AcsA undergoes a two-step reaction. In the first half reaction, AcsA combines acetate with ATP to form acetyl-adenylate (AcAMP) intermediate. In the second half reaction, it can then transfer the acetyl group from AcAMP to the sulfhydryl group of CoA, forming the product AcCoA. M.tuberculosis may use AcsA for both acetate and propionate assimilation. In Mycobacterium tuberculosis (strain CDC 1551 / Oshkosh), this protein is Acetyl-coenzyme A synthetase.